The chain runs to 477 residues: Secreted RxLR effector protein 102 (477 aa).

Residues 1–20 (MRGGYYVLTALFVVASSEIA) form the signal peptide. The short motif at 48–65 (RFLRESRGVHGNVANEER) is the RxLR-dEER element. 4 disordered regions span residues 326–345 (SKGQ…TSKG), 351–370 (IKRS…LPSI), 376–401 (SSKS…KRSR), and 433–455 (PRSA…APSS).

Belongs to the RxLR effector family.

Its subcellular location is the secreted. It is found in the host nucleus. Functionally, secreted effector that acts as an elicitor that induces cell death in host plant cells. The protein is Secreted RxLR effector protein 102 of Plasmopara viticola (Downy mildew of grapevine).